The sequence spans 267 residues: Thiamine thiazole synthase (267 aa).

Residues serine 41, 60–61, glycine 68, valine 132, and 160–162 contribute to the NAD(+) site; these read ER and HVD. Positions 162 and 177 each coordinate Fe cation. An NAD(+)-binding site is contributed by methionine 227. Arginine 237 is a binding site for glycine.

The protein belongs to the THI4 family. In terms of assembly, homooctamer; tetramer of dimers. Fe(2+) is required as a cofactor.

The enzyme catalyses hydrogen sulfide + glycine + NAD(+) = ADP-5-ethyl-4-methylthiazole-2-carboxylate + nicotinamide + 3 H2O + H(+). It functions in the pathway cofactor biosynthesis; thiamine diphosphate biosynthesis. Involved in the biosynthesis of the thiazole moiety of thiamine. Catalyzes the conversion of NAD and glycine to adenosine diphosphate 5-(2-hydroxyethyl)-4-methylthiazole-2-carboxylate (ADT), an adenylated thiazole intermediate, using free sulfide as a source of sulfur. This chain is Thiamine thiazole synthase, found in Saccharolobus islandicus (strain L.S.2.15 / Lassen #1) (Sulfolobus islandicus).